The primary structure comprises 394 residues: Envelope glycoprotein D (394 aa).

An N-terminal signal peptide occupies residues 1–25; the sequence is MGGAAARLGAVILFVVIVGLHGVRS. The tract at residues 26–57 is interaction with TNFRSF14; it reads KYALVDASLKMADPNRFRGKDLPVLDQLTDPP. Over 26 to 340 the chain is Virion surface; sequence KYALVDASLK…YHPPATPNNM (315 aa). His-64 contacts Zn(2+). 3 cysteine pairs are disulfide-bonded: Cys-91–Cys-214, Cys-131–Cys-227, and Cys-143–Cys-152. Residues Asn-119 and Asn-146 are each glycosylated (N-linked (GlcNAc...) asparagine; by host). Asp-240 contacts Zn(2+). The tract at residues 261–305 is profusion; sequence LKIAGWHGPKAPYTSTLLPPELSETPNATQPELAPEDPEDSALLE. The interval 275–301 is disordered; it reads STLLPPELSETPNATQPELAPEDPEDS. Asn-287 carries N-linked (GlcNAc...) asparagine; by host glycosylation. A helical membrane pass occupies residues 341–361; it reads GLIAGAVGGSLLAALVICGIV. Residues 362-394 lie on the Intravirion side of the membrane; that stretch reads YWMRRHTQKAPKRIRLPHIREDDQPSSHQPLFY. A disordered region spans residues 375 to 394; it reads IRLPHIREDDQPSSHQPLFY.

The protein belongs to the herpesviridae glycoprotein D family. As to quaternary structure, homodimer. Interacts with host receptor TNFRSF14. Interacts with host receptor NECTIN1. Interacts (via profusion domain) with gB; this interaction occurs in the absence of gH/gL. Interacts (via profusion domain) with gH/gL heterodimer; this interaction occurs in the absence of gB. Associates with the gB-gH/gL-gD complex. Interacts (via C-terminus) with UL11 tegument protein. Interacts (via C-terminus) with VP22 tegument protein; this interaction has been demonstrated in other strains, but might be very weak since PubMed:19279114 has failed to see it. Interacts with host RSAD2.

It localises to the virion membrane. It is found in the host Golgi apparatus. In terms of biological role, envelope glycoprotein that binds to the host cell entry receptors NECTIN1, TNFRSF14/HVEM and 3-O-sulfated heparan sulfate, promoting the virus entry into host cells. May trigger fusion with host membrane, by recruiting the fusion machinery composed of gB and gH/gL. The polypeptide is Envelope glycoprotein D (gD) (Homo sapiens (Human)).